Here is a 114-residue protein sequence, read N- to C-terminus: Aspartate 1-decarboxylase (114 aa).

S25 (schiff-base intermediate with substrate; via pyruvic acid) is an active-site residue. Position 25 is a pyruvic acid (Ser) (S25). T57 is a substrate binding site. Catalysis depends on Y58, which acts as the Proton donor. Position 71–73 (71–73 (GAA)) interacts with substrate.

This sequence belongs to the PanD family. As to quaternary structure, heterooctamer of four alpha and four beta subunits. Pyruvate serves as cofactor. Post-translationally, is synthesized initially as an inactive proenzyme, which is activated by self-cleavage at a specific serine bond to produce a beta-subunit with a hydroxyl group at its C-terminus and an alpha-subunit with a pyruvoyl group at its N-terminus.

It is found in the cytoplasm. It carries out the reaction L-aspartate + H(+) = beta-alanine + CO2. The protein operates within cofactor biosynthesis; (R)-pantothenate biosynthesis; beta-alanine from L-aspartate: step 1/1. Its function is as follows. Catalyzes the pyruvoyl-dependent decarboxylation of aspartate to produce beta-alanine. In Campylobacter hominis (strain ATCC BAA-381 / DSM 21671 / CCUG 45161 / LMG 19568 / NCTC 13146 / CH001A), this protein is Aspartate 1-decarboxylase.